The sequence spans 305 residues: tRNA dimethylallyltransferase 2 (305 aa).

14-21 (GPTASGKT) is a binding site for ATP. Substrate is bound at residue 16–21 (TASGKT). Positions 39-42 (DSRQ) are interaction with substrate tRNA.

It belongs to the IPP transferase family. As to quaternary structure, monomer. It depends on Mg(2+) as a cofactor.

It carries out the reaction adenosine(37) in tRNA + dimethylallyl diphosphate = N(6)-dimethylallyladenosine(37) in tRNA + diphosphate. Its function is as follows. Catalyzes the transfer of a dimethylallyl group onto the adenine at position 37 in tRNAs that read codons beginning with uridine, leading to the formation of N6-(dimethylallyl)adenosine (i(6)A). This is tRNA dimethylallyltransferase 2 from Trichlorobacter lovleyi (strain ATCC BAA-1151 / DSM 17278 / SZ) (Geobacter lovleyi).